Here is a 328-residue protein sequence, read N- to C-terminus: Transcription initiation factor IIB 4 (328 aa).

Basic and acidic residues-rich tracts occupy residues 1 to 12 (MTNQRTTRDGSH) and 21 to 32 (RSRESTDEDHGC). The tract at residues 1–47 (MTNQRTTRDGSHGTESVPTQRSRESTDEDHGCPECNGDLVTDEDRGE) is disordered. The TFIIB-type zinc-finger motif lies at 28–58 (EDHGCPECNGDLVTDEDRGETTCGECGLVVE). Zn(2+)-binding residues include cysteine 32, cysteine 35, cysteine 50, and cysteine 53. 2 consecutive repeat copies span residues 144–227 (GEIE…AREL) and 238–319 (SYVP…EILD).

Belongs to the TFIIB family.

Its function is as follows. Stabilizes TBP binding to an archaeal box-A promoter. Also responsible for recruiting RNA polymerase II to the pre-initiation complex (DNA-TBP-TFIIB). In Halobacterium salinarum (strain ATCC 700922 / JCM 11081 / NRC-1) (Halobacterium halobium), this protein is Transcription initiation factor IIB 4.